The sequence spans 461 residues: Ornithine decarboxylase (461 aa).

K69 bears the N6-(pyridoxal phosphate)lysine mark. Residues S200, G237, and E274–R277 each bind pyridoxal 5'-phosphate. S303 is modified (phosphoserine; by CK2). Substrate is bound at residue Y331–D332. C360 (proton donor; shared with dimeric partner) is an active-site residue. Residue C360 is modified to S-nitrosocysteine. D361 contributes to the substrate binding site. Position 389 (Y389) interacts with pyridoxal 5'-phosphate.

It belongs to the Orn/Lys/Arg decarboxylase class-II family. Homodimer. Only the dimer is catalytically active, as the active sites are constructed of residues from both monomers. Pyridoxal 5'-phosphate is required as a cofactor.

It catalyses the reaction L-ornithine + H(+) = putrescine + CO2. It functions in the pathway amine and polyamine biosynthesis; putrescine biosynthesis via L-ornithine pathway; putrescine from L-ornithine: step 1/1. Inhibited by antizymes (AZs) OAZ1, OAZ2 and OAZ3 in response to polyamine levels. AZs inhibit the assembly of the functional homodimer by binding to ODC monomers. Additionally, OAZ1 targets ODC monomers for ubiquitin-independent proteolytic destruction by the 26S proteasome. Functionally, catalyzes the first and rate-limiting step of polyamine biosynthesis that converts ornithine into putrescine, which is the precursor for the polyamines, spermidine and spermine. Polyamines are essential for cell proliferation and are implicated in cellular processes, ranging from DNA replication to apoptosis. This chain is Ornithine decarboxylase (Odc1), found in Mus pahari (Gairdner's shrew-mouse).